Consider the following 459-residue polypeptide: Acetyltransferase pigO (459 aa).

It belongs to the trichothecene O-acetyltransferase family.

Its pathway is secondary metabolite biosynthesis. Its function is as follows. Acetyltransferase; part of the gene cluster that mediates the biosynthesis of azaphilone pigments (MonAzPs), a complex mixture of compounds with a common azaphilone skeleton very widely used as food colorants. PigM and pigO are involved in the elimination of the omega-1 alcohol with pigM acting as an O-acetyltransferase that synthesizes the O-11 acetyl intermediate whereas pigO eliminates acetic acid to yield an intermediate with a C10(11) double bond. The first step of the pathway is performed by the nrPKS pigA that forms the hexaketide precursor from successive condensations of five malonyl-CoA units, with a simple acetyl-CoA starter unit. The role of esterase pigG is not clear, but it may play at most a supplementary role in the formation of the benzaldehyde produced by the pigA nrPKS. This very reactive benzaldehyde is intercepted by the pigC ketoreductase that to provide the first stable enzyme-free MonAzPs intermediate, 6-(4-hydroxy-2-oxopentyl)-3-methyl-2,4-dioxocyclohexane carbaldehyde, also known as M7PKS-1. The FAD-dependent monooxygenase pigN hydroxylates M7PKS-1 at C-4, which triggers the formation of the pyran ring. PigJ, pigK and pigD are involved in the acetylation of the pyran ring. PigJ and pigK form the two subunits of a dedicated fungal FAS that produces the side chain fatty acyl moiety of MonAzPs and pigD transfers the fatty acyl chain to the C-4 alcohol. PigM and pigO are involved in the elimination of the omega-1 alcohol. PigM acts as an O-acetyltransferase that synthesizes the putative O-11 acetyl intermediate whereas pigO eliminates acetic acid to yield an intermediate with a C10(11) double bond. The dehydration of the C-11 alcohol followed by the reduction of the C6(7) double bond by the NAD(P)H-dependent oxidoreductase pigE increases the electrophilicity of the C-5 ketone of the resulting acyl benzopyran. This in turn sets up the C-5 ketone for an intramolecular Knoevenagel aldol condensation with the C-20 enol of the side chain. This condensation affords the characteristic linear tricyclic carbon skeletons of the yellow pigments that serve as the common precursors for the classical yellow pigments monascin and ankaflavin, orange pigments rubopunctatin and monascorubrin, and red pigments ribropunctamine and monascorubramine. The FAD-dependent oxidoreductase pigF is especially invoved in the biosynthesis of orange and red pigments via desaturation of C6(7). This Monascus ruber (Mold) protein is Acetyltransferase pigO.